The following is a 201-amino-acid chain: MCRTLATFPNTCLERAKEFKTRLGIFLHKSELSSDTGGISKFEWASKHNKERSFSEDVLGWRESFDLLLNSKNGVAAFHAFLKTEFSEENLEFWLACEEFKKIRSATKLASRAHHIFDEYIRSEAPKEVNIDHETRELTKTNLQAATTSCFDVAQGKTRTLMEKDSYPRFLKSPAYRDLAAQASATSTSAPSGSPAEPSHT.

2 S-palmitoyl cysteine lipidation sites follow: cysteine 2 and cysteine 12. In terms of domain architecture, RGS spans 64-180 (SFDLLLNSKN…LKSPAYRDLA (117 aa)). Tyrosine 167 is modified (phosphotyrosine; by EGFR). Tyrosine 176 is modified (phosphotyrosine). Positions 181-201 (AQASATSTSAPSGSPAEPSHT) are disordered.

Interacts with GNAI1 and GNAQ. Interacts with GNAI3, GNAI3 and GNAO1. Palmitoylated on Cys-2 and/or Cys-12. In terms of processing, phosphorylated. Phosphorylation at Tyr-167 by EGFR enhances GTPase accelerating (GAP) activity toward GNAI1. Retinal; also predominantly expressed in the liver and pituitary.

It localises to the membrane. Functionally, regulates G protein-coupled receptor signaling cascades. Inhibits signal transduction by increasing the GTPase activity of G protein alpha subunits, thereby driving them into their inactive GDP-bound form. Plays an important role in the phototransduction cascade by regulating the lifetime and effective concentration of activated transducin alpha. May regulate extra and intracellular mitogenic signals. In Mus musculus (Mouse), this protein is Regulator of G-protein signaling 16 (Rgs16).